A 1140-amino-acid chain; its full sequence is Eukaryotic translation initiation factor 3 subunit A (1140 aa).

Positions 319–502 (LQRMAAHVLL…HCIYFGTDLT (184 aa)) constitute a PCI domain. 6 stretches are compositionally biased toward basic and acidic residues: residues 590–624 (NNAR…EERE), 826–903 (RMAQ…RPEG), 925–965 (DRAD…KDNE), 1000–1019 (SRDD…DFRN), 1026–1053 (RGGD…EQQR), and 1061–1087 (DAPR…RDVR). Disordered regions lie at residues 590–632 (NNAR…QNEI) and 826–1140 (RMAQ…VKRR). The span at 1091 to 1101 (PKEGGGGGGGN) shows a compositional bias: gly residues. Residues 1108-1130 (PRDEKPTTKQRDQPQDKENKAGD) are compositionally biased toward basic and acidic residues.

It belongs to the eIF-3 subunit A family. Component of the eukaryotic translation initiation factor 3 (eIF-3) complex. The eIF-3 complex interacts with pix.

It localises to the cytoplasm. In terms of biological role, RNA-binding component of the eukaryotic translation initiation factor 3 (eIF-3) complex, which is involved in protein synthesis of a specialized repertoire of mRNAs and, together with other initiation factors, stimulates binding of mRNA and methionyl-tRNAi to the 40S ribosome. The eIF-3 complex specifically targets and initiates translation of a subset of mRNAs involved in cell proliferation. The chain is Eukaryotic translation initiation factor 3 subunit A from Drosophila willistoni (Fruit fly).